A 154-amino-acid polypeptide reads, in one-letter code: Putative thioredoxin H10 (154 aa).

In terms of domain architecture, Thioredoxin spans 24–148 (NNNNSYGQTR…LQKKTAAAAD (125 aa)). Catalysis depends on nucleophile residues cysteine 74 and cysteine 77. Cysteines 74 and 77 form a disulfide.

It belongs to the thioredoxin family.

It localises to the cytoplasm. In terms of biological role, probable thiol-disulfide oxidoreductase that may be involved in the redox regulation of a number of cytosolic enzymes. The sequence is that of Putative thioredoxin H10 from Arabidopsis thaliana (Mouse-ear cress).